The following is a 262-amino-acid chain: Acyl-[acyl-carrier-protein]--UDP-N-acetylglucosamine O-acyltransferase (262 aa).

Belongs to the transferase hexapeptide repeat family. LpxA subfamily. In terms of assembly, homotrimer.

It localises to the cytoplasm. The enzyme catalyses a (3R)-hydroxyacyl-[ACP] + UDP-N-acetyl-alpha-D-glucosamine = a UDP-3-O-[(3R)-3-hydroxyacyl]-N-acetyl-alpha-D-glucosamine + holo-[ACP]. It functions in the pathway glycolipid biosynthesis; lipid IV(A) biosynthesis; lipid IV(A) from (3R)-3-hydroxytetradecanoyl-[acyl-carrier-protein] and UDP-N-acetyl-alpha-D-glucosamine: step 1/6. Involved in the biosynthesis of lipid A, a phosphorylated glycolipid that anchors the lipopolysaccharide to the outer membrane of the cell. The chain is Acyl-[acyl-carrier-protein]--UDP-N-acetylglucosamine O-acyltransferase from Klebsiella pneumoniae (strain 342).